We begin with the raw amino-acid sequence, 238 residues long: Testis-specific gene A8 protein (238 aa).

A disordered region spans residues 35-238; that stretch reads GKGAKTNKRG…GEAVATTTMT (204 aa). Basic residues predominate over residues 39 to 48; that stretch reads KTNKRGKRGG. A run of 8 repeats spans residues 79–93, 94–108, 109–123, 124–138, 153–158, 171–176, 180–185, and 189–194. Positions 79-148 are 4 X 15 AA tandem repeats of A-A-A-A-A-P-E-A-A-A-S-[PL]-E-S-S; that stretch reads AAAAAPEAAA…AAAAAPEAAA (70 aa). Composition is skewed to low complexity over residues 79-200 and 208-220; these read AAAA…AAPA and WEAAAVVGEAAVK. The 4 X 6 AA repeats of P-A-A-P-E-A stretch occupies residues 153-194; that stretch reads PAAPEAAAAPEVAAAPATPAAPEATAAPAAPEAATTPAAPEA.

As to expression, specifically expressed in testis (at protein level).

Its subcellular location is the cytoplasm. The protein localises to the nucleus. It is found in the nucleoplasm. This Mus musculus (Mouse) protein is Testis-specific gene A8 protein.